The following is a 221-amino-acid chain: Probable septum site-determining protein MinC (221 aa).

It belongs to the MinC family. In terms of assembly, interacts with MinD and FtsZ.

Functionally, cell division inhibitor that blocks the formation of polar Z ring septums. Rapidly oscillates between the poles of the cell to destabilize FtsZ filaments that have formed before they mature into polar Z rings. Prevents FtsZ polymerization. In Aliivibrio fischeri (strain MJ11) (Vibrio fischeri), this protein is Probable septum site-determining protein MinC.